A 558-amino-acid chain; its full sequence is Glucose-6-phosphate isomerase (558 aa).

A2 is modified (N-acetylalanine). N6-acetyllysine is present on K12. S86 and S107 each carry phosphoserine. An N6-acetyllysine modification is found at K142. 159-160 contributes to the D-glucose 6-phosphate binding site; the sequence is GS. Residue S185 is modified to Phosphoserine; by CK2. 210-215 is a binding site for D-glucose 6-phosphate; the sequence is SKTFTT. Residue T250 is modified to Phosphothreonine. Residues Q354, E358, and H389 each coordinate D-glucose 6-phosphate. The active-site Proton donor is E358. The active site involves H389. At K454 the chain carries N6-acetyllysine; alternate. K454 is modified (N6-malonyllysine; alternate). The residue at position 454 (K454) is an N6-succinyllysine; alternate. A Phosphoserine modification is found at S455. K519 lines the D-glucose 6-phosphate pocket. Residue K519 is part of the active site.

Belongs to the GPI family. In terms of assembly, homodimer; in the catalytically active form. Monomer in the secreted form. In terms of processing, phosphorylation at Ser-185 by CK2 has been shown to decrease enzymatic activity and may contribute to secretion by a non-classical secretory pathway. ISGylated.

It localises to the cytoplasm. The protein localises to the secreted. The catalysed reaction is alpha-D-glucose 6-phosphate = beta-D-fructose 6-phosphate. Its pathway is carbohydrate degradation; glycolysis; D-glyceraldehyde 3-phosphate and glycerone phosphate from D-glucose: step 2/4. In the cytoplasm, catalyzes the conversion of glucose-6-phosphate to fructose-6-phosphate, the second step in glycolysis, and the reverse reaction during gluconeogenesis. Besides it's role as a glycolytic enzyme, also acts as a secreted cytokine: acts as an angiogenic factor (AMF) that stimulates endothelial cell motility. Acts as a neurotrophic factor, neuroleukin, for spinal and sensory neurons. It is secreted by lectin-stimulated T-cells and induces immunoglobulin secretion. In Rattus norvegicus (Rat), this protein is Glucose-6-phosphate isomerase.